The chain runs to 344 residues: Protein RecA (344 aa).

64 to 71 (GPESSGKT) lines the ATP pocket.

The protein belongs to the RecA family.

The protein localises to the cytoplasm. Its function is as follows. Can catalyze the hydrolysis of ATP in the presence of single-stranded DNA, the ATP-dependent uptake of single-stranded DNA by duplex DNA, and the ATP-dependent hybridization of homologous single-stranded DNAs. It interacts with LexA causing its activation and leading to its autocatalytic cleavage. This is Protein RecA from Paramagnetospirillum magnetotacticum (Aquaspirillum magnetotacticum).